We begin with the raw amino-acid sequence, 257 residues long: MTVAVRVIPCLDVDAGRVVKGVNFQNLRDAGDPVELAATYDAQGADELTFLDVTASTGDRGTMIDVVTRTAEQIFIPLTVGGGVRTVEDVDRLLRAGADKVSVNTAAIARPEVLREMSERFGSQCIVLSVDARTVPDGQPDTPSGWEVTTHGGKRGTGIDAVEWAERGAELGVGEILLNSMDADGTKTGFDLPMIRAVRAAVSIPVIASGGAGAVEHFAPAVQAGADAVLAASVFHFGDLTIGQVKDSLRDAHLVVR.

Residues D12 and D131 contribute to the active site.

Belongs to the HisA/HisF family. In terms of assembly, heterodimer of HisH and HisF.

Its subcellular location is the cytoplasm. It carries out the reaction 5-[(5-phospho-1-deoxy-D-ribulos-1-ylimino)methylamino]-1-(5-phospho-beta-D-ribosyl)imidazole-4-carboxamide + L-glutamine = D-erythro-1-(imidazol-4-yl)glycerol 3-phosphate + 5-amino-1-(5-phospho-beta-D-ribosyl)imidazole-4-carboxamide + L-glutamate + H(+). It functions in the pathway amino-acid biosynthesis; L-histidine biosynthesis; L-histidine from 5-phospho-alpha-D-ribose 1-diphosphate: step 5/9. Functionally, IGPS catalyzes the conversion of PRFAR and glutamine to IGP, AICAR and glutamate. The HisF subunit catalyzes the cyclization activity that produces IGP and AICAR from PRFAR using the ammonia provided by the HisH subunit. The polypeptide is Imidazole glycerol phosphate synthase subunit HisF (Nocardia farcinica (strain IFM 10152)).